The chain runs to 184 residues: Ribosome-recycling factor (184 aa).

The protein belongs to the RRF family.

The protein localises to the cytoplasm. Functionally, responsible for the release of ribosomes from messenger RNA at the termination of protein biosynthesis. May increase the efficiency of translation by recycling ribosomes from one round of translation to another. The polypeptide is Ribosome-recycling factor (Clostridium botulinum (strain Loch Maree / Type A3)).